Consider the following 446-residue polypeptide: Na(+)-translocating NADH-quinone reductase subunit A (446 aa).

Belongs to the NqrA family. In terms of assembly, composed of six subunits; NqrA, NqrB, NqrC, NqrD, NqrE and NqrF.

It carries out the reaction a ubiquinone + n Na(+)(in) + NADH + H(+) = a ubiquinol + n Na(+)(out) + NAD(+). Its function is as follows. NQR complex catalyzes the reduction of ubiquinone-1 to ubiquinol by two successive reactions, coupled with the transport of Na(+) ions from the cytoplasm to the periplasm. NqrA to NqrE are probably involved in the second step, the conversion of ubisemiquinone to ubiquinol. This Vibrio campbellii (strain ATCC BAA-1116) protein is Na(+)-translocating NADH-quinone reductase subunit A.